We begin with the raw amino-acid sequence, 497 residues long: Serine/threonine-protein phosphatase 2A 56 kDa regulatory subunit beta isoform (497 aa).

The span at 1–19 shows a compositional bias: low complexity; sequence METKLPPASTPTSPSSPGL. Disordered stretches follow at residues 1–55 and 473–497; these read METK…YQSN and QGTQ…GGQS. Residues serine 32, serine 35, serine 44, serine 46, serine 47, and serine 48 each carry the phosphoserine modification. A compositionally biased stretch (basic residues) spans 34 to 45; it reads RSLRRARPRRSH.

Belongs to the phosphatase 2A regulatory subunit B56 family. In terms of assembly, component of the serine/threonine-protein phosphatase 2A complex (PP2A). This complex consists of a common heterodimeric core enzyme, composed of a 36 kDa catalytic subunit (subunit C) and a 65 kDa constant scaffold subunit (PR65 or subunit A), that associates with a variety of regulatory subunits. Proteins that associate with the core dimer include three families of regulatory subunits B (the R2/B/PR55/B55, R3/B''/PR72/PR130/PR59 and R5/B'/B56 families), the 48 kDa variable regulatory subunit, viral proteins, and cell signaling molecules. Interacts with SGO1. Interacts with AKT1. In terms of processing, ubiquitinated by CUL3-KLHL15 complex; this modification leads to proteasomal degradation.

Its subcellular location is the cytoplasm. Functionally, as the regulatory component of the serine/threonine-protein phosphatase 2A (PP2A) holoenzyme, modulates substrate specificity, subcellular localization, and responsiveness to phosphorylation. The phosphorylated form mediates the interaction between PP2A and AKT1, leading to AKT1 dephosphorylation. The protein is Serine/threonine-protein phosphatase 2A 56 kDa regulatory subunit beta isoform (Ppp2r5b) of Mus musculus (Mouse).